Consider the following 420-residue polypeptide: Histidine--tRNA ligase (420 aa).

The protein belongs to the class-II aminoacyl-tRNA synthetase family. As to quaternary structure, homodimer.

The protein resides in the cytoplasm. The enzyme catalyses tRNA(His) + L-histidine + ATP = L-histidyl-tRNA(His) + AMP + diphosphate + H(+). The chain is Histidine--tRNA ligase from Thermodesulfovibrio yellowstonii (strain ATCC 51303 / DSM 11347 / YP87).